The chain runs to 247 residues: tRNA uridine(34) hydroxylase (247 aa).

In terms of domain architecture, Rhodanese spans 124–218 (TKQDVIVIDT…YLEDTQNKNN (95 aa)). The Cysteine persulfide intermediate role is filled by Cys-178.

It belongs to the TrhO family.

It catalyses the reaction uridine(34) in tRNA + AH2 + O2 = 5-hydroxyuridine(34) in tRNA + A + H2O. Catalyzes oxygen-dependent 5-hydroxyuridine (ho5U) modification at position 34 in tRNAs. The polypeptide is tRNA uridine(34) hydroxylase (Rickettsia massiliae (strain Mtu5)).